Here is a 103-residue protein sequence, read N- to C-terminus: MTENLTVQPERLGVLASHHDNAAVDASSGVEAAAGLGESVAITHGPYCSQFNDTLNVYLTAHNALGSSLHTAGVDLAKSLRIAAKIYSEADEAWRKAIDGLFT.

N-acetylthreonine is present on T2.

This sequence belongs to the EspC family. Interacts with EccA1 and EspF.

It localises to the secreted. Required for ESX-1 function. Required for either stability or expression of EspA. The polypeptide is ESX-1 secretion-associated protein EspC (espC) (Mycobacterium tuberculosis (strain ATCC 25618 / H37Rv)).